Consider the following 286-residue polypeptide: 4-hydroxybenzoate octaprenyltransferase (286 aa).

7 consecutive transmembrane segments (helical) span residues 21-40 (GTLL…AGGM), 95-115 (ILFV…NGLV), 142-162 (FLGI…TGEV), 167-187 (WWLF…YAMV), 210-230 (QIIG…GWSA), 235-255 (LYGL…MLIF), and 266-286 (FLNN…DYLI).

It belongs to the UbiA prenyltransferase family. Mg(2+) serves as cofactor.

It localises to the cell inner membrane. It carries out the reaction all-trans-octaprenyl diphosphate + 4-hydroxybenzoate = 4-hydroxy-3-(all-trans-octaprenyl)benzoate + diphosphate. The protein operates within cofactor biosynthesis; ubiquinone biosynthesis. Functionally, catalyzes the prenylation of para-hydroxybenzoate (PHB) with an all-trans polyprenyl group. Mediates the second step in the final reaction sequence of ubiquinone-8 (UQ-8) biosynthesis, which is the condensation of the polyisoprenoid side chain with PHB, generating the first membrane-bound Q intermediate 3-octaprenyl-4-hydroxybenzoate. The protein is 4-hydroxybenzoate octaprenyltransferase of Shewanella baltica (strain OS155 / ATCC BAA-1091).